The following is a 234-amino-acid chain: Ubiquinone biosynthesis O-methyltransferase (234 aa).

Positions 37, 56, 77, and 121 each coordinate S-adenosyl-L-methionine.

It belongs to the methyltransferase superfamily. UbiG/COQ3 family.

The enzyme catalyses a 3-demethylubiquinol + S-adenosyl-L-methionine = a ubiquinol + S-adenosyl-L-homocysteine + H(+). The catalysed reaction is a 3-(all-trans-polyprenyl)benzene-1,2-diol + S-adenosyl-L-methionine = a 2-methoxy-6-(all-trans-polyprenyl)phenol + S-adenosyl-L-homocysteine + H(+). Its pathway is cofactor biosynthesis; ubiquinone biosynthesis. Functionally, O-methyltransferase that catalyzes the 2 O-methylation steps in the ubiquinone biosynthetic pathway. The protein is Ubiquinone biosynthesis O-methyltransferase of Aromatoleum aromaticum (strain DSM 19018 / LMG 30748 / EbN1) (Azoarcus sp. (strain EbN1)).